Reading from the N-terminus, the 147-residue chain is S-protein homolog 10 (147 aa).

The N-terminal stretch at 1–20 is a signal peptide; the sequence is MNCFSYFFLVIILCAGLNNA.

Belongs to the plant self-incompatibility (S1) protein family.

It is found in the secreted. The sequence is that of S-protein homolog 10 from Arabidopsis thaliana (Mouse-ear cress).